The following is an 80-amino-acid chain: MGIFMLKEILNKIFWHPDYKREDFEVVILHRGAEENKKAISLDDVELKGNYLIYFDTYIPLHRILEIRNKKTGEILYKKK.

It belongs to the UPF0248 family.

The chain is UPF0248 protein MJ1316 from Methanocaldococcus jannaschii (strain ATCC 43067 / DSM 2661 / JAL-1 / JCM 10045 / NBRC 100440) (Methanococcus jannaschii).